The sequence spans 142 residues: Large ribosomal subunit protein uL11 (142 aa).

Belongs to the universal ribosomal protein uL11 family. In terms of assembly, part of the ribosomal stalk of the 50S ribosomal subunit. Interacts with L10 and the large rRNA to form the base of the stalk. L10 forms an elongated spine to which L12 dimers bind in a sequential fashion forming a multimeric L10(L12)X complex. In terms of processing, one or more lysine residues are methylated.

Functionally, forms part of the ribosomal stalk which helps the ribosome interact with GTP-bound translation factors. The sequence is that of Large ribosomal subunit protein uL11 from Sinorhizobium medicae (strain WSM419) (Ensifer medicae).